The sequence spans 288 residues: MSSSMWYIMQSIQSKYSLSERLIRTIAAIRSFPHDNVEDLIRGGADVNCTHGTLKPLHCACMVSDADCVELLLEKGAEVNALDGYNRTALHYAAERDEACVEVLLEYGANPNALDGNRDTPLHWAAFKNNAECVRALLESGASVNALDYNNDTPLSWAAMKGNLESVSILLDYGAEVRVINLKGQTPISRLVALLVRGLGTEKEDSCFELLHRAVGQFELRKNGIMPREVTKDQQLCEKLTVLCSAPGTLKTLARYAVRRSLGLQYLPDAVKGLPLPVSLKDYLLLLE.

S17 bears the Phosphoserine mark. 4 ANK repeats span residues 52–81, 85–113, 117–146, and 150–179; these read GTLKPLHCACMVSDADCVELLLEKGAEVNA, YNRTALHYAAERDEACVEVLLEYGANPNA, NRDTPLHWAAFKNNAECVRALLESGASVNA, and NNDTPLSWAAMKGNLESVSILLDYGAEVRV. Residues 235–288 enclose the SOCS box domain; the sequence is QLCEKLTVLCSAPGTLKTLARYAVRRSLGLQYLPDAVKGLPLPVSLKDYLLLLE.

Belongs to the ankyrin SOCS box (ASB) family. Interacts with TBK1; this interaction promotes TBK1 proteasomal degradation. Phosphorylated by TBK1.

Its subcellular location is the cytoplasm. It functions in the pathway protein modification; protein ubiquitination. Functionally, may be a substrate-recognition component of a SCF-like ECS (Elongin-Cullin-SOCS-box protein) E3 ubiquitin-protein ligase complex which mediates the ubiquitination and subsequent proteasomal degradation of target proteins. Inhibits IFN-beta production through the IRF3 signaling pathway by targeting TBK1 via 'Lys-48'-linked ubiquitination, leading to its proteasomal degradation. The polypeptide is Ankyrin repeat and SOCS box protein 8 (Asb8) (Mus musculus (Mouse)).